The chain runs to 222 residues: GTP cyclohydrolase 1 (222 aa).

3 residues coordinate Zn(2+): cysteine 111, histidine 114, and cysteine 182.

This sequence belongs to the GTP cyclohydrolase I family. In terms of assembly, homomer.

The catalysed reaction is GTP + H2O = 7,8-dihydroneopterin 3'-triphosphate + formate + H(+). The protein operates within cofactor biosynthesis; 7,8-dihydroneopterin triphosphate biosynthesis; 7,8-dihydroneopterin triphosphate from GTP: step 1/1. This chain is GTP cyclohydrolase 1, found in Salmonella gallinarum (strain 287/91 / NCTC 13346).